We begin with the raw amino-acid sequence, 308 residues long: Protoheme IX farnesyltransferase (308 aa).

Transmembrane regions (helical) follow at residues 20 to 40 (LLAYLALTKPRVIELLLVTAI), 50 to 70 (AIHPLLMLNTLVGGMMAAAGA), 102 to 122 (NALALGLTLTVISFFWLWCAT), 124 to 144 (LLAGVLALVTVAFYVFVYTLW), 149 to 169 (TSQNVVWGGAAGCMPVMIGWS), 170 to 190 (AITGTIAWPALAMFAIIFFWT), 227 to 249 (LIYTWLTVAATLVLALATSWLYG), and 288 to 308 (YLAVVFCALAVDSVIALPTLH).

Belongs to the UbiA prenyltransferase family. Protoheme IX farnesyltransferase subfamily.

The protein resides in the cell membrane. The catalysed reaction is heme b + (2E,6E)-farnesyl diphosphate + H2O = Fe(II)-heme o + diphosphate. It functions in the pathway porphyrin-containing compound metabolism; heme O biosynthesis; heme O from protoheme: step 1/1. Functionally, converts heme B (protoheme IX) to heme O by substitution of the vinyl group on carbon 2 of heme B porphyrin ring with a hydroxyethyl farnesyl side group. The sequence is that of Protoheme IX farnesyltransferase from Mycobacterium tuberculosis (strain ATCC 25618 / H37Rv).